We begin with the raw amino-acid sequence, 333 residues long: Electron transfer flavoprotein subunit alpha, mitochondrial (333 aa).

Residues 1–19 constitute a mitochondrion transit peptide; it reads MFRAAAPGQLRRAASLLRF. The segment at 20–204 is domain I; sequence QSTLVIAEHA…GISEWLDQKL (185 aa). Lys59 carries the post-translational modification N6-acetyllysine; alternate. Lys59 is subject to N6-succinyllysine; alternate. An N6-acetyllysine modification is found at Lys62. Lys69 bears the N6-acetyllysine; alternate mark. Lys69 bears the N6-succinyllysine; alternate mark. Lys75 bears the N6-acetyllysine mark. At Lys85 the chain carries N6-acetyllysine; alternate. Lys85 carries the N6-succinyllysine; alternate modification. A Phosphothreonine modification is found at Thr93. N6-acetyllysine is present on residues Lys101 and Lys139. At Ser140 the chain carries Phosphoserine. The residue at position 158 (Lys158) is an N6-acetyllysine; alternate. Lys158 carries the post-translational modification N6-succinyllysine; alternate. Lys164 carries the N6-acetyllysine modification. The residue at position 187 (Lys187) is an N6-succinyllysine. N6-acetyllysine; alternate is present on Lys203. Lys203 carries the N6-succinyllysine; alternate modification. Residues 205–333 are domain II; the sequence is TKSDRPELTG…PEMTEILKKK (129 aa). Lys216 bears the N6-succinyllysine mark. Position 223 (Arg223) interacts with FAD. N6-acetyllysine; alternate occurs at positions 226 and 232. Lys226 and Lys232 each carry N6-succinyllysine; alternate. FAD contacts are provided by residues Ser248, 263–266, 281–286, and Asn300; these read VGQT and SGAIQH. Residue Lys301 is modified to N6-succinyllysine. Residue 318-319 coordinates FAD; it reads DL.

Belongs to the ETF alpha-subunit/FixB family. As to quaternary structure, heterodimer composed of ETFA and ETFB. Identified in a complex that contains ETFA, ETFB and ETFRF1. Interaction with ETFRF1 promotes dissociation of the bound FAD and loss of electron transfer activity. Interacts with TASOR. The cofactor is FAD.

The protein localises to the mitochondrion matrix. Functionally, heterodimeric electron transfer flavoprotein that accepts electrons from several mitochondrial dehydrogenases, including acyl-CoA dehydrogenases, glutaryl-CoA and sarcosine dehydrogenase. It transfers the electrons to the main mitochondrial respiratory chain via ETF-ubiquinone oxidoreductase (ETF dehydrogenase). Required for normal mitochondrial fatty acid oxidation and normal amino acid metabolism. In Rattus norvegicus (Rat), this protein is Electron transfer flavoprotein subunit alpha, mitochondrial (Etfa).